Reading from the N-terminus, the 510-residue chain is Putative cytochrome P450 cyp-13B1 (510 aa).

Cys-456 is a heme binding site.

The protein belongs to the cytochrome P450 family. Requires heme as cofactor.

In terms of biological role, cytochromes P450 are a group of heme-thiolate monooxygenases. They oxidize a variety of structurally unrelated compounds, including steroids, fatty acids, and xenobiotics. May play a role in the regulation of lifespan. The chain is Putative cytochrome P450 cyp-13B1 from Caenorhabditis elegans.